The following is a 145-amino-acid chain: DHIVSPHGFSYTSASLSPYVYAPYTYAASPYINPASVAVAPVNVATSYHAQDVIGQASYGHVDAYQAHHAVQDAAGNKVGSYSYVSPEGKVVKTNYVADATGFHVASNALPVGPTVVPAPVVDTPEVAAAKAAHLLEVEKVKGRV.

Residues 41 to 114 (PVNVATSYHA…VASNALPVGP (74 aa)) enclose the Chitin-binding type R&amp;R domain.

The polypeptide is Cuticle protein 7 (Blaberus craniifer (Death's head cockroach)).